We begin with the raw amino-acid sequence, 245 residues long: Glucan endo-1,3-beta-glucosidase (245 aa).

The first 23 residues, 1–23 (MMKTLVVVLSLSLTILSFGGAHA), serve as a signal peptide directing secretion. Cystine bridges form between Cys-32–Cys-244, Cys-80–Cys-90, Cys-95–Cys-102, Cys-150–Cys-233, Cys-155–Cys-216, Cys-163–Cys-179, Cys-183–Cys-192, and Cys-193–Cys-203.

The protein belongs to the thaumatin family. Abundantly expressed in ripening fruit.

The protein localises to the secreted. It catalyses the reaction Hydrolysis of (1-&gt;3)-beta-D-glucosidic linkages in (1-&gt;3)-beta-D-glucans.. The polypeptide is Glucan endo-1,3-beta-glucosidase (Prunus avium (Cherry)).